The primary structure comprises 466 residues: Ribulose bisphosphate carboxylase large chain (466 aa).

At lysine 5 the chain carries N6,N6,N6-trimethyllysine. Substrate contacts are provided by asparagine 114 and threonine 164. Lysine 166 serves as the catalytic Proton acceptor. Substrate is bound at residue lysine 168. Lysine 192, aspartate 194, and glutamate 195 together coordinate Mg(2+). N6-carboxylysine is present on lysine 192. Histidine 285 functions as the Proton acceptor in the catalytic mechanism. Positions 286, 318, and 370 each coordinate substrate.

The protein belongs to the RuBisCO large chain family. Type I subfamily. As to quaternary structure, heterohexadecamer of 8 large chains and 8 small chains; disulfide-linked. The disulfide link is formed within the large subunit homodimers. Requires Mg(2+) as cofactor. Post-translationally, the disulfide bond which can form in the large chain dimeric partners within the hexadecamer appears to be associated with oxidative stress and protein turnover.

It is found in the plastid. Its subcellular location is the chloroplast. The enzyme catalyses 2 (2R)-3-phosphoglycerate + 2 H(+) = D-ribulose 1,5-bisphosphate + CO2 + H2O. The catalysed reaction is D-ribulose 1,5-bisphosphate + O2 = 2-phosphoglycolate + (2R)-3-phosphoglycerate + 2 H(+). In terms of biological role, ruBisCO catalyzes two reactions: the carboxylation of D-ribulose 1,5-bisphosphate, the primary event in carbon dioxide fixation, as well as the oxidative fragmentation of the pentose substrate in the photorespiration process. Both reactions occur simultaneously and in competition at the same active site. In Vitis aestivalis (Grape), this protein is Ribulose bisphosphate carboxylase large chain.